A 683-amino-acid chain; its full sequence is Elongation factor G 2 (683 aa).

The region spanning 4–279 (QQMRNIGIMA…AVVEYLPAPQ (276 aa)) is the tr-type G domain. GTP contacts are provided by residues 13–20 (AHVDAGKT), 77–81 (DTPGH), and 131–134 (NKMD).

Belongs to the TRAFAC class translation factor GTPase superfamily. Classic translation factor GTPase family. EF-G/EF-2 subfamily.

It is found in the cytoplasm. Its function is as follows. Catalyzes the GTP-dependent ribosomal translocation step during translation elongation. During this step, the ribosome changes from the pre-translocational (PRE) to the post-translocational (POST) state as the newly formed A-site-bound peptidyl-tRNA and P-site-bound deacylated tRNA move to the P and E sites, respectively. Catalyzes the coordinated movement of the two tRNA molecules, the mRNA and conformational changes in the ribosome. The sequence is that of Elongation factor G 2 (fusB) from Treponema pallidum (strain Nichols).